The chain runs to 410 residues: Acetate kinase (410 aa).

Mg(2+) is bound at residue Asn7. Lys14 is a binding site for ATP. Arg88 serves as a coordination point for substrate. The active-site Proton donor/acceptor is the Asp145. ATP contacts are provided by residues 203–207 (HAGNG), 278–280 (DTR), and 326–330 (GIGEN). Glu379 provides a ligand contact to Mg(2+).

This sequence belongs to the acetokinase family. In terms of assembly, homodimer. It depends on Mg(2+) as a cofactor. Mn(2+) serves as cofactor.

The protein resides in the cytoplasm. The enzyme catalyses acetate + ATP = acetyl phosphate + ADP. Its pathway is metabolic intermediate biosynthesis; acetyl-CoA biosynthesis; acetyl-CoA from acetate: step 1/2. Catalyzes the formation of acetyl phosphate from acetate and ATP. Can also catalyze the reverse reaction. The sequence is that of Acetate kinase from Chlorante-Aster yellows phytoplasma.